The primary structure comprises 104 residues: Large ribosomal subunit protein uL24 (104 aa).

Belongs to the universal ribosomal protein uL24 family. In terms of assembly, part of the 50S ribosomal subunit.

In terms of biological role, one of two assembly initiator proteins, it binds directly to the 5'-end of the 23S rRNA, where it nucleates assembly of the 50S subunit. Functionally, one of the proteins that surrounds the polypeptide exit tunnel on the outside of the subunit. In Shewanella amazonensis (strain ATCC BAA-1098 / SB2B), this protein is Large ribosomal subunit protein uL24.